The sequence spans 415 residues: Probable glucan 1,3-beta-glucosidase A (415 aa).

The signal sequence occupies residues 1–22 (MLSRLSQTALVALSLMTVLTEA). Residue E210 is the Proton donor of the active site. 2 disulfide bridges follow: C290–C414 and C315–C341. E307 acts as the Nucleophile in catalysis. Positions 335-359 (SPRYGDCGNKRQGSSSGLSEQERSD) are disordered.

The protein belongs to the glycosyl hydrolase 5 (cellulase A) family. Monomer. Requires Mn(2+) as cofactor.

It localises to the secreted. It catalyses the reaction Successive hydrolysis of beta-D-glucose units from the non-reducing ends of (1-&gt;3)-beta-D-glucans, releasing alpha-glucose.. In terms of biological role, beta-glucanases participate in the metabolism of beta-glucan, the main structural component of the cell wall. It could also function biosynthetically as a transglycosylase. This Aspergillus clavatus (strain ATCC 1007 / CBS 513.65 / DSM 816 / NCTC 3887 / NRRL 1 / QM 1276 / 107) protein is Probable glucan 1,3-beta-glucosidase A (exgA).